We begin with the raw amino-acid sequence, 285 residues long: Probable endonuclease 4 (285 aa).

9 residues coordinate Zn(2+): His-69, His-109, Glu-145, Asp-179, His-182, His-216, Asp-229, His-231, and Glu-261.

This sequence belongs to the AP endonuclease 2 family. The cofactor is Zn(2+).

The enzyme catalyses Endonucleolytic cleavage to 5'-phosphooligonucleotide end-products.. Endonuclease IV plays a role in DNA repair. It cleaves phosphodiester bonds at apurinic or apyrimidinic (AP) sites, generating a 3'-hydroxyl group and a 5'-terminal sugar phosphate. The polypeptide is Probable endonuclease 4 (Escherichia coli O81 (strain ED1a)).